A 317-amino-acid chain; its full sequence is Melanocyte-stimulating hormone receptor (317 aa).

Residues 1 to 37 (MPVQGSQRRLLGSLNSTPTAPPHLGLAANQTGARCLE) lie on the Extracellular side of the membrane. Asn-29 carries an N-linked (GlcNAc...) asparagine glycan. The helical transmembrane segment at 38–63 (VSIPDGLFLSLGLVSLVENVLVVTAI) threads the bilayer. The Cytoplasmic segment spans residues 64 to 72 (AKNRNLHSP). Residues 73–93 (MYCFICCLALSDLLVSGSNML) form a helical membrane-spanning segment. Topologically, residues 94–118 (ETAVILLLEAGALAARAAVVQQLDN) are extracellular. The helical transmembrane segment at 119–140 (VIDVITCSSMLSSLCFLGAIAV) threads the bilayer. Over 141–163 (DRYISIFYALRYHSIVTLPRARR) the chain is Cytoplasmic. The chain crosses the membrane as a helical span at residues 164–183 (AVAAIWVASVLFSMLFIAYY). Residues 184 to 191 (DHAAVLLC) lie on the Extracellular side of the membrane. The chain crosses the membrane as a helical span at residues 192 to 211 (LVVFFLAMLVLMAVLYIHML). At 212 to 240 (VRACQHAQGIARLHKRQRPAHQGFGLKGA) the chain is on the cytoplasmic side. Residues 241-266 (ATLTILLGIFFLCWGPFFLHLTLIVL) traverse the membrane as a helical segment. Residues 267 to 279 (CPQHPTCSCIFKN) lie on the Extracellular side of the membrane. The chain crosses the membrane as a helical span at residues 280–300 (FNLFLALIICNAIIDPLIYAF). Residues 301 to 317 (RSQELRRTLKEVLLCSW) lie on the Cytoplasmic side of the membrane. Residue Cys-315 is the site of S-palmitoyl cysteine attachment.

Belongs to the G-protein coupled receptor 1 family. Interacts with MGRN1, but does not undergo MGRN1-mediated ubiquitination; this interaction competes with GNAS-binding and thus inhibits agonist-induced cAMP production. Interacts with OPN3; the interaction results in a decrease in MC1R-mediated cAMP signaling and ultimately a decrease in melanin production in melanocytes.

The protein resides in the cell membrane. In terms of biological role, receptor for MSH (alpha, beta and gamma) and ACTH. The activity of this receptor is mediated by G proteins which activate adenylate cyclase. Mediates melanogenesis, the production of eumelanin (black/brown) and phaeomelanin (red/yellow), via regulation of cAMP signaling in melanocytes. The chain is Melanocyte-stimulating hormone receptor (MC1R) from Cercopithecus diana (Diana monkey).